A 396-amino-acid polypeptide reads, in one-letter code: Purine ribonucleoside efflux pump NepI (396 aa).

At 1 to 21 (MSEFIAENRGADAITRPNWSA) the chain is on the cytoplasmic side. Residues 22 to 42 (VFSVAFCVACLIIVEFLPVSL) form a helical membrane-spanning segment. The Periplasmic portion of the chain corresponds to 43–54 (LTPMAQDLGISE). A helical transmembrane segment spans residues 55–75 (GVAGQSVTVTAFVAMFASLFI). Residues 76 to 85 (TQTIQATDRR) lie on the Cytoplasmic side of the membrane. The helical transmembrane segment at 86-106 (YVVILFAVLLTLSCLLVSFAN) threads the bilayer. A topological domain (periplasmic) is located at residue S107. The helical transmembrane segment at 108–128 (FSLLLIGRACLGLALGGFWAI) threads the bilayer. At 129–147 (SASLTMRLVPPRTVPKALS) the chain is on the cytoplasmic side. Residues 148–168 (VIFGAVSIALVIAAPLGGFLG) form a helical membrane-spanning segment. The Periplasmic segment spans residues 169 to 175 (ELIGWRN). A helical transmembrane segment spans residues 176–196 (VFNAAAAMGVLCIFWIIKSLP). Residues 197-215 (SLPGEPSHQKQNTFRLLQR) lie on the Cytoplasmic side of the membrane. A helical transmembrane segment spans residues 216–236 (PGVMAGMIAIFMSFAGQFAFF). Topologically, residues 237–255 (TYIRPVYMNLAGFGVDGLT) are periplasmic. Residues 256-276 (LVLLSFGIASFVGTSLSSFIL) form a helical membrane-spanning segment. The Cytoplasmic segment spans residues 277–281 (KRSVK). The helical transmembrane segment at 282–302 (LALAGAPFVLALSALVLTLWG) threads the bilayer. The Periplasmic portion of the chain corresponds to 303-305 (SDK). The chain crosses the membrane as a helical span at residues 306–326 (IVATGVAIIWGLTFALIPVGW). Residues 327 to 343 (STWITRSLADQAEKAGS) lie on the Cytoplasmic side of the membrane. The helical transmembrane segment at 344 to 364 (IQVAVIQLANTCGAAIGGYAL) threads the bilayer. The Periplasmic portion of the chain corresponds to 365–366 (DN). The helical transmembrane segment at 367–387 (IGLTSPLMLSGTLMLLTALLV) threads the bilayer. The Cytoplasmic portion of the chain corresponds to 388–396 (TAKVKMKKS).

It belongs to the major facilitator superfamily. DHA1 family. NepI (TC 2.A.1.2.26) subfamily.

The protein localises to the cell inner membrane. It carries out the reaction inosine(in) + H(+)(out) = inosine(out) + H(+)(in). The enzyme catalyses guanosine(in) + H(+)(out) = guanosine(out) + H(+)(in). Its function is as follows. Involved in the efflux of purine ribonucleosides, such as inosine and guanosine. The chain is Purine ribonucleoside efflux pump NepI from Escherichia coli O127:H6 (strain E2348/69 / EPEC).